The sequence spans 143 residues: Mannitol-specific phosphotransferase enzyme IIA component (143 aa).

The 142-residue stretch at Met1–His142 folds into the PTS EIIA type-2 domain. The active-site Tele-phosphohistidine intermediate is His61. The residue at position 61 (His61) is a Phosphohistidine; by HPr.

The protein localises to the cytoplasm. Its function is as follows. The phosphoenolpyruvate-dependent sugar phosphotransferase system (sugar PTS), a major carbohydrate active transport system, catalyzes the phosphorylation of incoming sugar substrates concomitantly with their translocation across the cell membrane. The enzyme II CmtAB PTS system is involved in D-mannitol transport. This is Mannitol-specific phosphotransferase enzyme IIA component (mtlF) from Mycoplasma pneumoniae (strain ATCC 29342 / M129 / Subtype 1) (Mycoplasmoides pneumoniae).